The following is a 271-amino-acid chain: uncharacterized protein (271 aa).

This is an uncharacterized protein from Galliformes (FAdV-1).